Here is a 306-residue protein sequence, read N- to C-terminus: Agmatinase (306 aa).

Histidine 128, aspartate 151, histidine 153, aspartate 155, aspartate 232, and aspartate 234 together coordinate Mn(2+).

The protein belongs to the arginase family. Agmatinase subfamily. The cofactor is Mn(2+).

It catalyses the reaction agmatine + H2O = urea + putrescine. Its pathway is amine and polyamine biosynthesis; putrescine biosynthesis via agmatine pathway; putrescine from agmatine: step 1/1. In terms of biological role, catalyzes the formation of putrescine from agmatine. This Proteus mirabilis protein is Agmatinase (speB).